A 57-amino-acid chain; its full sequence is UPF0391 membrane protein RPA3029 (57 aa).

The next 2 membrane-spanning stretches (helical) occupy residues 6 to 26 (WALI…TGIS) and 35 to 55 (ILFY…FTIF).

Belongs to the UPF0391 family.

The protein resides in the cell membrane. This Rhodopseudomonas palustris (strain ATCC BAA-98 / CGA009) protein is UPF0391 membrane protein RPA3029.